Here is a 540-residue protein sequence, read N- to C-terminus: Chaperonin GroEL 1 (540 aa).

Residues 29–32 (TIGP), 86–90 (DGTTT), G415, 479–481 (NAA), and D495 each bind ATP.

It belongs to the chaperonin (HSP60) family. In terms of assembly, forms a cylinder of 14 subunits composed of two heptameric rings stacked back-to-back. Interacts with the co-chaperonin GroES.

The protein resides in the cytoplasm. The catalysed reaction is ATP + H2O + a folded polypeptide = ADP + phosphate + an unfolded polypeptide.. Together with its co-chaperonin GroES, plays an essential role in assisting protein folding. The GroEL-GroES system forms a nano-cage that allows encapsulation of the non-native substrate proteins and provides a physical environment optimized to promote and accelerate protein folding. The polypeptide is Chaperonin GroEL 1 (Streptomyces albus G).